Here is a 489-residue protein sequence, read N- to C-terminus: Bridging integrator 2 (489 aa).

The 217-residue stretch at 28-244 folds into the BAR domain; the sequence is VLQKLGKTVE…MSKLEKQHSN (217 aa). Residues 267-302 are compositionally biased toward low complexity; sequence QSCAASSPVSPVSPVSPVTSPTSPSATSEPESVSAT. Positions 267–489 are disordered; the sequence is QSCAASSPVS…ASGGLVGLFL (223 aa). Phosphoserine is present on serine 273. Over residues 311-331 the composition is skewed to acidic residues; it reads GGEDSCESQESLKDEEADEAQ. Serine 357 is subject to Phosphoserine. Low complexity predominate over residues 358 to 368; sequence QEEALSSSAQS. A phosphoserine mark is found at serine 380, serine 392, serine 420, serine 422, serine 424, serine 430, serine 435, serine 439, and serine 443.

In terms of assembly, homodimer. Interacts with BIN1. Interacts with ARHGEF6 (via SH3 domain), ARHGEF7 (via SH3 domain), SH3GL1, SH3GL2 and SH3GL3. Identified in a complex with ARHGEF6 and GIT2.

It is found in the cytoplasm. Its subcellular location is the cell projection. The protein resides in the podosome membrane. It localises to the cell cortex. The protein localises to the phagocytic cup. Its function is as follows. Promotes cell motility and migration, probably via its interaction with the cell membrane and with podosome proteins that mediate interaction with the cytoskeleton. Modulates membrane curvature and mediates membrane tubulation. Inhibits phagocytosis. Plays a role in podosome formation. The sequence is that of Bridging integrator 2 (Bin2) from Mus musculus (Mouse).